A 251-amino-acid chain; its full sequence is Haloacid dehalogenase-like hydrolase domain-containing protein 3 (251 aa).

An N6-acetyllysine; alternate modification is found at Lys15. Lys15 bears the N6-succinyllysine; alternate mark. Lys130 bears the N6-acetyllysine mark.

This sequence belongs to the HAD-like hydrolase superfamily.

In Bos taurus (Bovine), this protein is Haloacid dehalogenase-like hydrolase domain-containing protein 3 (HDHD3).